Consider the following 857-residue polypeptide: Leucine-rich repeat extensin-like protein 5 (857 aa).

The N-terminal stretch at 1–31 (MKTKMMMKNTSLIFVLLFITFFFTSISYSLS) is a signal peptide. The LRR 1 repeat unit spans residues 32–53 (LTFNGDLSDNEVRLITQRQLLY). N-linked (GlcNAc...) asparagine glycosylation occurs at Asn-98. LRR repeat units follow at residues 125 to 149 (IRTV…LGLL), 150 to 172 (TDLA…RFNR), 174 to 197 (KLLF…VLQL), 198 to 221 (PSLK…LFSK), 223 to 244 (LDAI…LGDS), 246 to 267 (VSVI…LGDM), 268 to 291 (RNLE…IGRL), 292 to 315 (KNVT…IGGM), 316 to 339 (VSME…ICQL), and 341 to 362 (RLEN…CLGL). An N-linked (GlcNAc...) asparagine glycan is attached at Asn-293. A glycan (N-linked (GlcNAc...) asparagine) is linked at Asn-344. 2 disordered regions span residues 406 to 776 (PPVV…EYSP) and 817 to 839 (YSPP…YEGP). Pro residues-rich tracts occupy residues 408-571 (VVVP…PTPI) and 579-768 (PIIP…PQSH). The segment at 615–857 (SPPPSTPTPV…YASPPPPPFY (243 aa)) is contains the Ser-Pro(4) repeats.

Post-translationally, hydroxylated on proline residues in the S-P-P-P-P repeat. O-glycosylated on hydroxyprolines. In terms of tissue distribution, expressed in roots, leaves and flowers.

Its subcellular location is the secreted. It localises to the cell wall. In terms of biological role, modulates cell morphogenesis by regulating cell wall formation and assembly, and/or growth polarization. In Arabidopsis thaliana (Mouse-ear cress), this protein is Leucine-rich repeat extensin-like protein 5 (LRX5).